Consider the following 1479-residue polypeptide: C-type mannose receptor 2 (1479 aa).

An N-terminal signal peptide occupies residues 1–30 (MVPIRPALAPWPRHLLRCVLLLGGLRLGHP). Residues 31-1413 (ADSAAALLEP…SAALPESPVA (1383 aa)) are Extracellular-facing. The Ricin B-type lectin domain occupies 37–190 (LLEPDVFLIF…SHGKPCTIPF (154 aa)). Cysteines 92 and 111 form a disulfide. N-linked (GlcNAc...) asparagine glycans are attached at residues Asn-101 and Asn-139. The Fibronectin type-II domain occupies 181–229 (SHGKPCTIPFKYDNQWFHGCTSTGREDGHLWCATTQDYGKDERWGFCPI). 4 disulfides stabilise this stretch: Cys-186–Cys-212, Cys-200–Cys-227, Cys-265–Cys-358, and Cys-334–Cys-350. A C-type lectin 1 domain is found at 243-359 (LTDSCYQFNF…CSIALPYVCK (117 aa)). Asn-363 is a glycosylation site (N-linked (GlcNAc...) asparagine). C-type lectin domains follow at residues 388 to 504 (FQGH…SICK), 527 to 643 (HSPS…RYIC), 677 to 808 (KLRH…WICK), 831 to 950 (FQEA…YICK), 978 to 1106 (FLNK…GFIC), 1131 to 1242 (YLNH…GAVC), and 1271 to 1391 (FREH…GVVC). 7 disulfides stabilise this stretch: Cys-409/Cys-503, Cys-480/Cys-495, Cys-617/Cys-634, Cys-703/Cys-807, Cys-784/Cys-799, Cys-852/Cys-949, and Cys-926/Cys-941. Residue Asn-1028 is glycosylated (N-linked (GlcNAc...) asparagine). Cys-1077 and Cys-1097 are oxidised to a cystine. Residue Lys-1141 forms a Glycyl lysine isopeptide (Lys-Gly) (interchain with G-Cter in SUMO1) linkage. A disulfide bridge connects residues Cys-1219 and Cys-1233. N-linked (GlcNAc...) asparagine glycosylation occurs at Asn-1348. A disulfide bridge connects residues Cys-1367 and Cys-1382. The chain crosses the membrane as a helical span at residues 1414-1434 (LVVVLTAVLLLLALMTAALIL). Topologically, residues 1435-1479 (YRRRQSAERGSFEGARYSRSSHSGPAEATEKNILVSDMEMNEQQE) are cytoplasmic. Positions 1446-1479 (FEGARYSRSSHSGPAEATEKNILVSDMEMNEQQE) are disordered.

As to quaternary structure, interacts directly with PLAUR/UPAR and PLAU/pro-UPA to form a tri-molecular complex. Interacts with collagen V and with C-terminal region of type I collagen/COL1A1. Post-translationally, phosphorylated. Highly expressed in heart, lung and kidney, but little or no expression in brain, thymus or adult liver. Expressed at highly endothelialized sites such as those in choroid plexus and kidney glomerulai as well as in chondrocytes in cartilaginous regions of the embryo.

The protein localises to the membrane. In terms of biological role, may play a role as endocytotic lectin receptor displaying calcium-dependent lectin activity. Internalizes glycosylated ligands from the extracellular space for release in an endosomal compartment via clathrin-mediated endocytosis. May be involved in plasminogen activation system controlling the extracellular level of PLAUR/PLAU, and thus may regulate protease activity at the cell surface. May contribute to cellular uptake, remodeling and degradation of extracellular collagen matrices. May participate in remodeling of extracellular matrix cooperating with the matrix metalloproteinases (MMPs). The sequence is that of C-type mannose receptor 2 (Mrc2) from Mus musculus (Mouse).